Reading from the N-terminus, the 444-residue chain is Sperm-associated antigen 4 protein (444 aa).

The segment at 1-109 (MRRNPRPGSA…GGASEPSGSP (109 aa)) is disordered. The span at 19-36 (NFYSENSNSSHSATSGDS) shows a compositional bias: low complexity. A run of 2 helical transmembrane segments spans residues 137–159 (FLSL…LVCV) and 166–188 (IRFL…WGLL). The stretch at 204–241 (LSQYHHRVHSQGQQLQQLQAELSKLHKEVTSVRAAHSE) forms a coiled coil. The 162-residue stretch at 267–428 (GASIDLEKTS…YRVRAHGVRI (162 aa)) folds into the SUN domain.

As to quaternary structure, self-associates. Interacts with ODF1. May associate with microtubules. Interacts with SUN3 and SYNE1; suggesting the formation of a LINC complexs; a SUN domain-based heterotrimer of SPAG4 and SUN3 may associate with SYNE1. Interacts with SEPT12 and LMNB1; during spermatogenesis. As to expression, testis specific. Exclusively expressed in spermatids.

Its subcellular location is the membrane. It is found in the cytoplasm. The protein resides in the cytoskeleton. It localises to the flagellum axoneme. The protein localises to the nucleus envelope. Its subcellular location is the nucleus inner membrane. Functionally, involved in spermatogenesis. Required for sperm head formation but not required to establish and maintain general polarity of the sperm head. Required for anchoring and organization of the manchette. Required for targeting of SUN3 and probably SYNE1 through a probable SUN1:SYNE3 LINC complex to the nuclear envelope and involved in accurate posterior sperm head localization of the complex. May anchor SUN3 the nuclear envelope. Involved in maintenance of the nuclear envelope integrity. May assist the organization and assembly of outer dense fibers (ODFs), a specific structure of the sperm tail. The chain is Sperm-associated antigen 4 protein (Spag4) from Rattus norvegicus (Rat).